The chain runs to 208 residues: Fusaric acid resistance protein FusD (208 aa).

A helical membrane pass occupies residues 7–29; that stretch reads LLLSMLVSAIAFAVLFPPTAPWL.

Its subcellular location is the cell membrane. Involved in the resistance (detoxification) of the fungal toxin fusaric acid. This chain is Fusaric acid resistance protein FusD (fusD), found in Burkholderia cepacia (Pseudomonas cepacia).